Reading from the N-terminus, the 232-residue chain is uncharacterized protein (232 aa).

5 helical membrane passes run leucine 4–glutamate 24, valine 42–leucine 62, leucine 100–methionine 120, leucine 145–leucine 165, and glycine 171–phenylalanine 191.

The protein resides in the cell membrane. This is an uncharacterized protein from Aquifex aeolicus (strain VF5).